Here is a 359-residue protein sequence, read N- to C-terminus: Type-1 angiotensin II receptor (359 aa).

The Extracellular portion of the chain corresponds to 1-25; that stretch reads MILNSSTEDGIKRIQDDCPKAGRHN. A glycan (N-linked (GlcNAc...) (complex) asparagine) is linked at N4. Angiotensin II is bound by residues Q15 and D17. 2 disulfides stabilise this stretch: C18-C274 and C101-C180. The chain crosses the membrane as a helical span at residues 26-55; it reads YIFVMIPTLYSIIFVVGIFGNSLVVIVIYF. The Cytoplasmic segment spans residues 56–61; sequence YMKLKT. A helical transmembrane segment spans residues 62 to 89; it reads VASVFLLNLALADLCFLLTLPLWAVYTA. Residues 90–98 lie on the Extracellular side of the membrane; it reads MEYRWPFGN. The helical transmembrane segment at 99–125 threads the bilayer; it reads YLCKIASASVSFNLYASVFLLTCLSID. The Cytoplasmic segment spans residues 126 to 141; that stretch reads RYLAIVHPMKSRLRRT. Residues 142-165 form a helical membrane-spanning segment; sequence MLVAKVTCIIIWLLAGLASLPAII. Residues 166–190 are Extracellular-facing; the sequence is HRNVFFIENTNITVCAFHYESQNST. Position 167 (R167) interacts with angiotensin II. N176 carries N-linked (GlcNAc...) asparagine glycosylation. Angiotensin II-binding residues include F182, H183, and Y184. N188 is a glycosylation site (N-linked (GlcNAc...) asparagine). Residues 191–216 traverse the membrane as a helical segment; sequence LPIGLGLTKNILGFLFPFLIILTSYT. K199 is a binding site for angiotensin II. Over 217-239 the chain is Cytoplasmic; the sequence is LIWKALKKAYEIQKNKPRNDDIF. A helical transmembrane segment spans residues 240-268; it reads KIIMAIVLFFFFSWIPHQIFTFLDVLIQL. The Extracellular segment spans residues 269 to 278; sequence GIIRDCRIAD. Residues 279-304 form a helical membrane-spanning segment; that stretch reads IVDTAMPITICIAYFNNCLNPLFYGF. Topologically, residues 305–359 are cytoplasmic; sequence LGKKFKRYFLQLLKYIPPKAKSHSNLSTKMSTLSYRPSDNVSSSTKKPAPCFEVE. Positions 335–350 are enriched in polar residues; that stretch reads STLSYRPSDNVSSSTK. The interval 335 to 359 is disordered; it reads STLSYRPSDNVSSSTKKPAPCFEVE. The S-palmitoyl cysteine moiety is linked to residue C355.

The protein belongs to the G-protein coupled receptor 1 family. Interacts with MAS1. Interacts with ARRB1. Interacts with FLNA (via filamin repeat 21); increases PKA-mediated phosphorylation of FLNA. In terms of processing, C-terminal Ser or Thr residues may be phosphorylated. As to expression, liver, lung, adrenal and adrenocortical adenomas.

Its subcellular location is the cell membrane. With respect to regulation, strongly inhibited by anti-hypertensive drugs losartan, candesartan, valsartan, irbesartan, telmisartan, eprosartan, olmesartan and azilsartan, most of which share a common biphenyl-tetrazole scaffold. Receptor for angiotensin II, a vasoconstricting peptide, which acts as a key regulator of blood pressure and sodium retention by the kidney. The activated receptor in turn couples to G-alpha proteins G(q) (GNAQ, GNA11, GNA14 or GNA15) and thus activates phospholipase C and increases the cytosolic Ca(2+) concentrations, which in turn triggers cellular responses such as stimulation of protein kinase C. In terms of biological role, (Microbial infection) During SARS coronavirus-2/SARS-CoV-2 infection, it is able to recognize and internalize the complex formed by secreted ACE2 and SARS-CoV-2 spike protein through DNM2/dynamin 2-dependent endocytosis. The protein is Type-1 angiotensin II receptor of Homo sapiens (Human).